The primary structure comprises 227 residues: ATP synthase F(0) complex subunit a (227 aa).

6 helical membrane-spanning segments follow: residues 14–34 (LLGIPLILLSLLFPTLLLPSP), 69–89 (WALILTSLMTFLLLINLLGLL), 98–118 (QLSMNMALAFPLWLATLLTGL), 139–159 (IPALILIETTSLLIRPLALGV), 174–194 (LISTATLALLPTMPTISVLTA), and 196–216 (VLLLLTILELAVAMIQAYVFV).

This sequence belongs to the ATPase A chain family. In terms of assembly, component of the ATP synthase complex composed at least of ATP5F1A/subunit alpha, ATP5F1B/subunit beta, ATP5MC1/subunit c (homooctomer), MT-ATP6/subunit a, MT-ATP8/subunit 8, ATP5ME/subunit e, ATP5MF/subunit f, ATP5MG/subunit g, ATP5MK/subunit k, ATP5MJ/subunit j, ATP5F1C/subunit gamma, ATP5F1D/subunit delta, ATP5F1E/subunit epsilon, ATP5PF/subunit F6, ATP5PB/subunit b, ATP5PD/subunit d, ATP5PO/subunit OSCP. ATP synthase complex consists of a soluble F(1) head domain (subunits alpha(3) and beta(3)) - the catalytic core - and a membrane F(0) domain - the membrane proton channel (subunits c, a, 8, e, f, g, k and j). These two domains are linked by a central stalk (subunits gamma, delta, and epsilon) rotating inside the F1 region and a stationary peripheral stalk (subunits F6, b, d, and OSCP). Interacts with DNAJC30; interaction is direct.

It is found in the mitochondrion inner membrane. The catalysed reaction is H(+)(in) = H(+)(out). Functionally, subunit a, of the mitochondrial membrane ATP synthase complex (F(1)F(0) ATP synthase or Complex V) that produces ATP from ADP in the presence of a proton gradient across the membrane which is generated by electron transport complexes of the respiratory chain. ATP synthase complex consist of a soluble F(1) head domain - the catalytic core - and a membrane F(1) domain - the membrane proton channel. These two domains are linked by a central stalk rotating inside the F(1) region and a stationary peripheral stalk. During catalysis, ATP synthesis in the catalytic domain of F(1) is coupled via a rotary mechanism of the central stalk subunits to proton translocation. With the subunit c (ATP5MC1), forms the proton-conducting channel in the F(0) domain, that contains two crucial half-channels (inlet and outlet) that facilitate proton movement from the mitochondrial intermembrane space (IMS) into the matrix. Protons are taken up via the inlet half-channel and released through the outlet half-channel, following a Grotthuss mechanism. This Struthio camelus (Common ostrich) protein is ATP synthase F(0) complex subunit a.